The primary structure comprises 1398 residues: MASTSSFRASSSSSTPSIPRTTTYDVFLSFRGEDTRYNFTDHLYSALGRRGIRTFRDDRLRRGEAIAPELLKAIEESRSSVIVFSENYAHSRWCLDELVKIMECQKDLGHAVFPIFYHVDPSHVRKQEGSFGEAFAGYEENWKDKIPRWRTALTEAANLSGWHLLDDRYESNQIKEITNSIFRQLKCKRLDVGANLVGIDSHVKEMILRLHLESSDVRMVGIYGVGGIGKTTIAKVIYNELSCEFEYMSFLENIREGSNPQVLFHLQNQLLGDILEGEGSQNISSVAHRASMIKDILLSRRVFIVLDDVDDLSQLEYLLGHREWLGEGSRVIITTRNKHVLAVQEVDDLYEVEGLNFEEACELFSLYAFKQNLPKSDYRNLTCRVVGYCQGLPLALKVLGSLLCKKTIPQWEGELKKLDSEPKADIHKVLKRSYDGLDRIDKNIFLDLACFFKGEGRDFVLRILDGCDFPAETGISNLNDLCLITLPYNQICMHDLIQQMGWEIVRENFPVEPNKWSRLWDPCDFERALTADEGIKSVETMSLDLSKLKRVCSNSNVFAKMTKLRLLKVYSSSDIDSAHGDSDEDIEEVYDVVMKDASKMQLGQSFKFPSYELRYLRWDGYPLDSLPLNFDGGKLVELHLKCSNIKQLWQGHKDLERLKVIDLSYSRKLSQMSEFSSMPNLERLCLSGCVSLIDIHPSVGNMKKLTTLSLRSCNKLKNLPDSIGDLESLESLYLSNCSKFEKFPEKGGNMKSLTELDLKNTAIKDLPDSIGDLESLESLYLSNCSKFEKFPEKGGNMKSLTELDLKNTAIKDLPDSIGDLESLEILNLSDCAKFEKFPEKGGNMKSLKELDLQNTAIKDLPDSIGDLKSLKYLSLSDCSKFEKFPEKGGNMKRLLQLILSNTAIKDLPDSIGDLESLKYLYLSDCSKFEKFPEKGGNMKSLTELDLKNTAIKDLPDSIGDLESLEILNLSDCAKFEKFPEKGGNMKSLKELDLQNTAIKDLPDSIGDLESLKYLYLSDCSKFEKFPEKGGNMKSLLQLILSNTAIKDLPDSIGDLESLEYLHLSVCSKFEKFPEKGGNMKSLRELGLRNTAIKDLPDSIGDLESLEMLSLSNCPKFEVLPLSLKAIDAHLCTSKEDLSRLLWLCHRNWLKSTTEEFDRWQLSAFIPESSGIPEWITYQNLGSEVTEKLPINWCEDPDFPGFVLSCVYRPSCDYSSAYIFCHDFKCELNLHGNGFRFRDVCYHECWCDCHVNFKDSRDLVCVYWYPKTAIPEEDHHKYTHINASFKSDEVKIKKCGINVIFLGDQRNHMPMLEHPQNSGDNGSALQDANGNVHGANQDDEHYHIPLLDLLRNLSLGDNGSVVLEDTLGNRKRRRNDSLPDVVEEPLYKRLGGPHTEISL.

A TIR domain is found at 22 to 185; the sequence is TTYDVFLSFR…EITNSIFRQL (164 aa). NAD(+) contacts are provided by residues 31 to 36 and Gly63; that span reads RGEDTR. Glu97 is a catalytic residue. The NB-ARC domain maps to 201–440; it reads SHVKEMILRL…KRSYDGLDRI (240 aa). LRR repeat units lie at residues 203-225, 423-447, 478-504, 535-560, 610-632, 633-657, 678-702, 703-726, 728-750, 751-773, 775-797, 798-820, 822-844, 845-867, 869-891, 892-914, 916-938, 939-961, 963-985, 986-1008, 1010-1032, 1033-1055, 1079-1102, and 1105-1128; these read VKEMILRLHLESSDVRMVGIYGV, KADIHKVLKRSYDGLDRIDKNIFLD, LNDLCLITLPYNQICMHDLIQQMGWEI, IKSVETMSLDLSKLKRVCSNSNVFAK, SYELRYLRWDGYPLDSLPLNFDG, GKLVELHLKCSNIKQLWQGHKDLER, MPNLERLCLSGCVSLIDIHPSVGNM, KKLTTLSLRSCNKLKNLPDSIGDL, SLESLYLSNCSKFEKFPEKGGNM, KSLTELDLKNTAIKDLPDSIGDL, SLEILNLSDCAKFEKFPEKGGNM, KSLKELDLQNTAIKDLPDSIGDL, SLKYLSLSDCSKFEKFPEKGGNM, KRLLQLILSNTAIKDLPDSIGDL, SLKYLYLSDCSKFEKFPEKGGNM, KSLLQLILSNTAIKDLPDSIGDL, MKSLRELGLRNTAIKDLPDSIGDL, and LEMLSLSNCPKFEVLPLSLKAIDA. The span at 1315–1328 shows a compositional bias: polar residues; that stretch reads QNSGDNGSALQDAN. Residues 1315-1336 are disordered; that stretch reads QNSGDNGSALQDANGNVHGANQ. The LRR 25 repeat unit spans residues 1346–1369; the sequence is LDLLRNLSLGDNGSVVLEDTLGNR. The Nuclear localization signal signature appears at 1369-1373; that stretch reads RKRRR.

This sequence belongs to the disease resistance TIR-NB-LRR family. In terms of assembly, homodimer; homodimerization is required for NAD(+) hydrolase (NADase) activity.

It is found in the nucleus. It localises to the cytoplasm. The enzyme catalyses NAD(+) + H2O = ADP-D-ribose + nicotinamide + H(+). Disease resistance (R) protein that confers resistance to multiple powdery and downy mildew by promoting cell death. Acts as a NAD(+) hydrolase (NADase): in response to activation, catalyzes cleavage of NAD(+) into ADP-D-ribose (ADPR) and nicotinamide; NAD(+) cleavage triggering a defense system that promotes cell death. This chain is Disease resistance protein RPV1, found in Vitis rotundifolia (Muscadine grape).